We begin with the raw amino-acid sequence, 199 residues long: Zinc finger matrin-type protein 2 (199 aa).

An N-acetylalanine modification is found at A2. Residues K8, K36, K39, K45, K55, K61, K64, K70, K102, and K123 each participate in a glycyl lysine isopeptide (Lys-Gly) (interchain with G-Cter in SUMO2) cross-link. Residues 27-46 are disordered; it reads KRLTEEREKKDGKPVQPVKR. The Matrin-type zinc finger occupies 80–104; the sequence is YYCNVCDCVVKDSINFLDHINGKKH. A compositionally biased stretch (basic and acidic residues) spans 150-173; sequence REEEEKAKAYKKEKQKEKKRRAEE. Residues 150-175 form a disordered region; that stretch reads REEEEKAKAYKKEKQKEKKRRAEEDL.

Component of the spliceosome B complex.

The protein resides in the nucleus. In terms of biological role, involved in pre-mRNA splicing as a component of the spliceosome. The sequence is that of Zinc finger matrin-type protein 2 (ZMAT2) from Homo sapiens (Human).